A 161-amino-acid polypeptide reads, in one-letter code: Cyclic pyranopterin monophosphate synthase (161 aa).

Substrate contacts are provided by residues 75-77 (LCH) and 113-114 (ME). Asp128 is an active-site residue.

This sequence belongs to the MoaC family. Homohexamer; trimer of dimers.

It carries out the reaction (8S)-3',8-cyclo-7,8-dihydroguanosine 5'-triphosphate = cyclic pyranopterin phosphate + diphosphate. Its pathway is cofactor biosynthesis; molybdopterin biosynthesis. Functionally, catalyzes the conversion of (8S)-3',8-cyclo-7,8-dihydroguanosine 5'-triphosphate to cyclic pyranopterin monophosphate (cPMP). This chain is Cyclic pyranopterin monophosphate synthase, found in Salmonella arizonae (strain ATCC BAA-731 / CDC346-86 / RSK2980).